The sequence spans 371 residues: uncharacterized protein (371 aa).

Transmembrane regions (helical) follow at residues 4–24 (LPML…FIYG), 60–82 (LIQL…ALYG), 87–109 (LWIV…MLSI), 130–150 (VFIN…FVAS), 197–217 (VVAV…LLPV), 224–244 (IYPL…YGLV), 282–302 (VPIW…GFHA), and 320–340 (FIFY…CMVG).

Belongs to the peptide transporter carbon starvation (CstA) (TC 2.A.114) family.

It localises to the cell membrane. This is an uncharacterized protein from Haemophilus influenzae (strain ATCC 51907 / DSM 11121 / KW20 / Rd).